A 208-amino-acid polypeptide reads, in one-letter code: Uracil phosphoribosyltransferase (208 aa).

Residues Arg-78, Arg-103, and 130–138 each bind 5-phospho-alpha-D-ribose 1-diphosphate; that span reads DPMLATGGS. Residues Ile-193 and 198–200 each bind uracil; that span reads GDA. Position 199 (Asp-199) interacts with 5-phospho-alpha-D-ribose 1-diphosphate.

The protein belongs to the UPRTase family. Requires Mg(2+) as cofactor.

It carries out the reaction UMP + diphosphate = 5-phospho-alpha-D-ribose 1-diphosphate + uracil. Its pathway is pyrimidine metabolism; UMP biosynthesis via salvage pathway; UMP from uracil: step 1/1. Allosterically activated by GTP. In terms of biological role, catalyzes the conversion of uracil and 5-phospho-alpha-D-ribose 1-diphosphate (PRPP) to UMP and diphosphate. This is Uracil phosphoribosyltransferase from Neisseria meningitidis serogroup C (strain 053442).